The sequence spans 225 residues: E3 ubiquitin-protein ligase ATL59 (225 aa).

Residues 22–42 (FTFIVCVPICVILIVLLVLYI) form a helical membrane-spanning segment. Residues 97 to 139 (CSVCLGDYQAEEKLQQMPSCGHTFHMECIDLWLTSHTTCPLCR) form an RING-type; atypical zinc finger.

The protein belongs to the RING-type zinc finger family. ATL subfamily.

Its subcellular location is the membrane. It catalyses the reaction S-ubiquitinyl-[E2 ubiquitin-conjugating enzyme]-L-cysteine + [acceptor protein]-L-lysine = [E2 ubiquitin-conjugating enzyme]-L-cysteine + N(6)-ubiquitinyl-[acceptor protein]-L-lysine.. Its pathway is protein modification; protein ubiquitination. Its function is as follows. E3 ubiquitin-protein ligase able to catalyze polyubiquitination with ubiquitin-conjugating enzyme E2 UBC8, UBC10, UBC11, and UBC34 in vitro. This chain is E3 ubiquitin-protein ligase ATL59 (ATL59), found in Arabidopsis thaliana (Mouse-ear cress).